A 314-amino-acid chain; its full sequence is GMP synthase [glutamine-hydrolyzing] subunit B (314 aa).

The 185-residue stretch at 2-186 (FDPKKFVEEA…LGIPDEIVER (185 aa)) folds into the GMPS ATP-PPase domain. Residue 29–35 (SGGVDST) participates in ATP binding.

As to quaternary structure, heterodimer composed of a glutamine amidotransferase subunit (A) and a GMP-binding subunit (B).

The enzyme catalyses XMP + L-glutamine + ATP + H2O = GMP + L-glutamate + AMP + diphosphate + 2 H(+). Its pathway is purine metabolism; GMP biosynthesis; GMP from XMP (L-Gln route): step 1/1. In terms of biological role, catalyzes the synthesis of GMP from XMP. This chain is GMP synthase [glutamine-hydrolyzing] subunit B (guaAB), found in Methanopyrus kandleri (strain AV19 / DSM 6324 / JCM 9639 / NBRC 100938).